The primary structure comprises 150 residues: Urease accessory protein UreE (150 aa).

It belongs to the UreE family.

It is found in the cytoplasm. In terms of biological role, involved in urease metallocenter assembly. Binds nickel. Probably functions as a nickel donor during metallocenter assembly. The sequence is that of Urease accessory protein UreE from Parasynechococcus marenigrum (strain WH8102).